Here is a 354-residue protein sequence, read N- to C-terminus: Rhodopsin (354 aa).

Over 1 to 36 (MNGTEGPDFYVPMVNTTGIVRSPYDYPQYYLVNPAA) the chain is Extracellular. Residues Asn2 and Asn15 are each glycosylated (N-linked (GlcNAc...) asparagine). Residues 37–61 (FSMLAAYMFFLILVGFPVNFLTLYV) traverse the membrane as a helical segment. Topologically, residues 62–73 (TMEHKKLRTPLN) are cytoplasmic. Residues 74–96 (YILLNLAVANLFMVIGGFTTTMY) traverse the membrane as a helical segment. Residues 97 to 110 (TSMHGYFVLGRTGC) lie on the Extracellular side of the membrane. A disulfide bridge links Cys110 with Cys187. A helical transmembrane segment spans residues 111-133 (NLEGFFATLGGEIALWSLVVLAV). Residues 134–136 (ERW) carry the 'Ionic lock' involved in activated form stabilization motif. Topologically, residues 134-152 (ERWVVVCKPISNFRFGENH) are cytoplasmic. Residues 153–173 (AVMGVSFTWLMACACSVPPLF) form a helical membrane-spanning segment. The Extracellular portion of the chain corresponds to 174 to 202 (GWSRYIPEGMQCSCGIDYYTRAPGYNNES). The helical transmembrane segment at 203 to 224 (FVIYMFVCHFSIPLTIIFFCYG) threads the bilayer. The Cytoplasmic portion of the chain corresponds to 225 to 252 (RLLCAVKDAAAAQQESETTQRAEREVSR). Residues 253–274 (MVVIMVIGFLICWLPYASVAWF) traverse the membrane as a helical segment. The Extracellular segment spans residues 275–286 (IFTHQGSEFGPV). A helical membrane pass occupies residues 287–308 (FMTIPAFFAKSSAIYNPMIYIC). Residue Lys296 is modified to N6-(retinylidene)lysine. The Cytoplasmic segment spans residues 309–354 (MNKQFRHCMITTLCCGKNPFEEEEGASTTASKTEASSVSSSHVSPA). S-palmitoyl cysteine attachment occurs at residues Cys322 and Cys323. A disordered region spans residues 333 to 354 (GASTTASKTEASSVSSSHVSPA). Low complexity predominate over residues 334-354 (ASTTASKTEASSVSSSHVSPA).

Belongs to the G-protein coupled receptor 1 family. Opsin subfamily. Phosphorylated on some or all of the serine and threonine residues present in the C-terminal region. In terms of processing, contains one covalently linked retinal chromophore.

Its subcellular location is the membrane. It localises to the cell projection. The protein resides in the cilium. It is found in the photoreceptor outer segment. Its function is as follows. Photoreceptor required for image-forming vision at low light intensity. While most salt water fish species use retinal as chromophore, most freshwater fish use 3-dehydroretinal, or a mixture of retinal and 3-dehydroretinal. Light-induced isomerization of 11-cis to all-trans retinal triggers a conformational change that activates signaling via G-proteins. Subsequent receptor phosphorylation mediates displacement of the bound G-protein alpha subunit by arrestin and terminates signaling. In Zeus faber (John Dory), this protein is Rhodopsin (rho).